We begin with the raw amino-acid sequence, 219 residues long: Predicted GPI-anchored protein 6 (219 aa).

A signal peptide spans 1–19; sequence MQFQTLLVVAGSLVASTLA. 3 N-linked (GlcNAc...) asparagine glycosylation sites follow: asparagine 21, asparagine 173, and asparagine 188. Glycine 194 is lipidated: GPI-anchor amidated glycine. Residues 195-219 constitute a propeptide, removed in mature form; the sequence is GAVGGASNQITVGFAAIAGLAAILL.

This sequence belongs to the flocculin family. In terms of processing, the GPI-anchor is attached to the protein in the endoplasmic reticulum and serves to target the protein to the cell surface. There, the glucosamine-inositol phospholipid moiety is cleaved off and the GPI-modified mannoprotein is covalently attached via its lipidless GPI glycan remnant to the 1,6-beta-glucan of the outer cell wall layer.

It localises to the secreted. The protein resides in the cell wall. It is found in the membrane. In terms of biological role, probable cell wall protein that participates directly in adhesive cell-cell interactions. In Candida albicans (strain SC5314 / ATCC MYA-2876) (Yeast), this protein is Predicted GPI-anchored protein 6 (PGA6).